The primary structure comprises 112 residues: Large ribosomal subunit protein bL21 (112 aa).

This sequence belongs to the bacterial ribosomal protein bL21 family. As to quaternary structure, part of the 50S ribosomal subunit. Contacts protein L20.

Functionally, this protein binds to 23S rRNA in the presence of protein L20. In Buchnera aphidicola subsp. Baizongia pistaciae (strain Bp), this protein is Large ribosomal subunit protein bL21.